Consider the following 100-residue polypeptide: Urease subunit gamma (100 aa).

The protein belongs to the urease gamma subunit family. In terms of assembly, heterotrimer of UreA (gamma), UreB (beta) and UreC (alpha) subunits. Three heterotrimers associate to form the active enzyme.

The protein localises to the cytoplasm. The enzyme catalyses urea + 2 H2O + H(+) = hydrogencarbonate + 2 NH4(+). It participates in nitrogen metabolism; urea degradation; CO(2) and NH(3) from urea (urease route): step 1/1. This chain is Urease subunit gamma, found in Mycolicibacterium gilvum (strain PYR-GCK) (Mycobacterium gilvum (strain PYR-GCK)).